We begin with the raw amino-acid sequence, 388 residues long: Galactokinase (388 aa).

Substrate is bound at residue 33-36 (EHTD). Residues serine 67 and 124-130 (GSGLSSS) contribute to the ATP site. Mg(2+) is bound by residues serine 130 and glutamate 162. Catalysis depends on aspartate 174, which acts as the Proton acceptor. Residue tyrosine 224 participates in substrate binding.

This sequence belongs to the GHMP kinase family. GalK subfamily.

The protein resides in the cytoplasm. It carries out the reaction alpha-D-galactose + ATP = alpha-D-galactose 1-phosphate + ADP + H(+). The protein operates within carbohydrate metabolism; galactose metabolism. In terms of biological role, catalyzes the transfer of the gamma-phosphate of ATP to D-galactose to form alpha-D-galactose-1-phosphate (Gal-1-P). This chain is Galactokinase, found in Streptococcus thermophilus.